Consider the following 534-residue polypeptide: CAP-Gly domain-containing linker protein 3 (534 aa).

Positions 1–16 (MTREDLPDSTPEESKL) are enriched in basic and acidic residues. The tract at residues 1–33 (MTREDLPDSTPEESKLPMEFQSPLLEKRRRPVV) is disordered. 3 ANK repeats span residues 107–148 (TDMT…LRSR), 150–173 (TNMNALHYAAYFDVPELLRTLLKA), and 187–299 (NHGT…KAGT). The CAP-Gly 1 domain occupies 304 to 346 (GTTEFASGQWVGVELDEPDGKNDGSVGGIRYFICPPKQGIFAP). Residues 349-391 (KISKAPDQPPSSVTSTPRTPRVDFSRVTGKGRKEKKATHKKSL) form a disordered region. The segment covering 358 to 367 (PSSVTSTPRT) has biased composition (low complexity). Over residues 377-390 (GKGRKEKKATHKKS) the composition is skewed to basic residues. A CAP-Gly 2 domain is found at 423-465 (GKTDFAPGYWFGIELEKPTGKHDGSVFGVRYFTCSAKNGVFAP). Residues 475 to 534 (PKDPQTDNNDMKKVHQVTMTQPKRNFTKVRTPKEIASENSMSRILFCCWFPWLLRAEMKS) form a goLD region.

Homodimer.

Its subcellular location is the cytoplasm. It localises to the golgi apparatus. The protein localises to the golgi stack. Functionally, functions as a cytoplasmic linker protein. Involved in TGN-endosome dynamics. The protein is CAP-Gly domain-containing linker protein 3 (clip3) of Xenopus laevis (African clawed frog).